The sequence spans 76 residues: Tautomerase PptA (76 aa).

Catalysis depends on P2, which acts as the Proton acceptor; via imino nitrogen.

The protein belongs to the 4-oxalocrotonate tautomerase family. PptA subfamily. As to quaternary structure, homodimer.

Its subcellular location is the cytoplasm. The protein is Tautomerase PptA of Pectobacterium carotovorum subsp. carotovorum (strain PC1).